The sequence spans 200 residues: Adenylate kinase (200 aa).

Residue 10–15 coordinates ATP; sequence GAGKGT. An NMP region spans residues 30 to 59; that stretch reads STGDMLRAAVAAGTPVGLEAKSIMESGGLV. AMP-binding positions include Thr31, Arg36, 57–59, 85–88, and Gln92; these read GLV and GFPR. The tract at residues 126-142 is LID; sequence KRAEETAARGQPVRKDD. An ATP-binding site is contributed by Arg127. AMP is bound by residues Arg139 and Arg150. ATP is bound at residue Lys178.

It belongs to the adenylate kinase family. As to quaternary structure, monomer.

Its subcellular location is the cytoplasm. It catalyses the reaction AMP + ATP = 2 ADP. The protein operates within purine metabolism; AMP biosynthesis via salvage pathway; AMP from ADP: step 1/1. Catalyzes the reversible transfer of the terminal phosphate group between ATP and AMP. Plays an important role in cellular energy homeostasis and in adenine nucleotide metabolism. In Methylorubrum populi (strain ATCC BAA-705 / NCIMB 13946 / BJ001) (Methylobacterium populi), this protein is Adenylate kinase.